Reading from the N-terminus, the 505-residue chain is Flagellin (505 aa).

The protein belongs to the bacterial flagellin family.

The protein localises to the secreted. Its subcellular location is the bacterial flagellum. Functionally, flagellin is the subunit protein which polymerizes to form the filaments of bacterial flagella. The sequence is that of Flagellin (fliC) from Salmonella budapest.